Consider the following 752-residue polypeptide: Cation-transporting P-type ATPase B (752 aa).

The region spanning 15–78 (RRIRLDVSGM…VVEKAGYHAA (64 aa)) is the HMA domain. A metal cation is bound by residues C26 and C29. The next 6 membrane-spanning stretches (helical) occupy residues 105–125 (LLVAAVLFVPLADLSTLFAIV), 132–152 (GWGYILTALAAPVVTWAAWPF), 167–187 (METLISVGIVAATAWSLSSVF), 201–221 (AILNSDSIYLEVAAGVTVFVL), 361–381 (IAGVFVPVVFVIAGLAGAAWL), and 390–410 (AFSVTLGVLVIACPCALGLAT). D446 functions as the 4-aspartylphosphate intermediate in the catalytic mechanism. A helical transmembrane segment spans residues 714 to 734 (AIPIAAAGLLNPLIAGAAMAF).

This sequence belongs to the cation transport ATPase (P-type) (TC 3.A.3) family. Type IB subfamily.

Its subcellular location is the cell membrane. It carries out the reaction ATP + H2O = ADP + phosphate + H(+). The polypeptide is Cation-transporting P-type ATPase B (ctpB) (Mycobacterium bovis (strain ATCC BAA-935 / AF2122/97)).